A 962-amino-acid chain; its full sequence is Vacuolar membrane protease (962 aa).

Topologically, residues 1–14 (MLAQFLRSLFRFRK) are cytoplasmic. A helical transmembrane segment spans residues 15–35 (TTVSVLLVATYVVVFLLNVWD). Over 36 to 359 (RIRYQYSLPE…FVTASTKDLF (324 aa)) the chain is Vacuolar. A glycan (N-linked (GlcNAc...) asparagine) is linked at Asn118. Zn(2+) is bound by residues His153 and Asp165. Catalysis depends on Glu197, which acts as the Proton acceptor. The Zn(2+) site is built by Glu198, Glu223, and His297. Residues 360–380 (TLNCVVLSVIPVIILVLEFVI) traverse the membrane as a helical segment. Residues 381-390 (QRRKTRERNP) are Cytoplasmic-facing. Residues 391–411 (LLVWLRLPFSMFISYLVTATF) form a helical membrane-spanning segment. Topologically, residues 412-431 (RSSLFRVNPLIFSRDYVSPT) are vacuolar. The helical transmembrane segment at 432–452 (IGFSFTFLILNYLVLSLLEYL) threads the bilayer. At 453–460 (APSRDLKT) the chain is on the cytoplasmic side. The chain crosses the membrane as a helical span at residues 461–481 (VSFVELFFGMWIALLWATIRL). The Vacuolar segment spans residues 482–489 (CTSKYTAT). Residues 490–510 (GVYPITVLYLLMSFGAIVGLV) traverse the membrane as a helical segment. Over 511-601 (CSAFKRKHSV…VVSALNYDWS (91 aa)) the chain is Cytoplasmic. Positions 531–554 (APNTYSSIEESPQQATNTEAPNEN) are enriched in polar residues. A disordered region spans residues 531-563 (APNTYSSIEESPQQATNTEAPNENSPEEHDERA). A helical transmembrane segment spans residues 602-622 (VQFLAVVPLASFFVIMCLSLI). The Vacuolar portion of the chain corresponds to 623–639 (LDGIYQTCQEGFQATWN). An N-linked (GlcNAc...) asparagine glycan is attached at Asn639. A helical transmembrane segment spans residues 640–660 (VSKISMLGGMLLAIPVLPFCY). Lys661 is a topological domain (cytoplasmic). A helical transmembrane segment spans residues 662–682 (LNYFVSMVLLFAAASAGIFSF). The Vacuolar segment spans residues 683-962 (ERAPFTESSP…LVIVNDYIEL (280 aa)). N-linked (GlcNAc...) asparagine glycans are attached at residues Asn812 and Asn839.

It belongs to the peptidase M28 family. Requires Zn(2+) as cofactor.

Its subcellular location is the vacuole membrane. In terms of biological role, may be involved in vacuolar sorting and osmoregulation. This Lachancea thermotolerans (strain ATCC 56472 / CBS 6340 / NRRL Y-8284) (Yeast) protein is Vacuolar membrane protease.